Consider the following 331-residue polypeptide: Pectinesterase (331 aa).

Residues 1–17 form the signal peptide; that stretch reads MVKSILASVLFAATALA. Residue Gln138 coordinates substrate. The Proton donor role is filled by Asp161. Catalysis depends on Asp182, which acts as the Nucleophile. 2 residues coordinate substrate: Arg247 and Trp249.

This sequence belongs to the pectinesterase family.

It is found in the secreted. It catalyses the reaction [(1-&gt;4)-alpha-D-galacturonosyl methyl ester](n) + n H2O = [(1-&gt;4)-alpha-D-galacturonosyl](n) + n methanol + n H(+). It functions in the pathway glycan metabolism; pectin degradation; 2-dehydro-3-deoxy-D-gluconate from pectin: step 1/5. Involved in maceration and soft-rotting of plant tissue. This is Pectinesterase (pme1) from Aspergillus niger.